A 348-amino-acid polypeptide reads, in one-letter code: Phosphoribosylformylglycinamidine cyclo-ligase (348 aa).

This sequence belongs to the AIR synthase family.

It localises to the cytoplasm. It catalyses the reaction 2-formamido-N(1)-(5-O-phospho-beta-D-ribosyl)acetamidine + ATP = 5-amino-1-(5-phospho-beta-D-ribosyl)imidazole + ADP + phosphate + H(+). It functions in the pathway purine metabolism; IMP biosynthesis via de novo pathway; 5-amino-1-(5-phospho-D-ribosyl)imidazole from N(2)-formyl-N(1)-(5-phospho-D-ribosyl)glycinamide: step 2/2. This chain is Phosphoribosylformylglycinamidine cyclo-ligase, found in Cereibacter sphaeroides (strain ATCC 17025 / ATH 2.4.3) (Rhodobacter sphaeroides).